Consider the following 293-residue polypeptide: MKSTFLWTACVTPFNCSGDSIDYQSLQRLLTMQAETENGVVLLGSTGESLSLTDSEKRTLVEFVCELKLNTKIIIGVPGVNLYQTLEWLDFCKGMPIHGYLMTTPIYAKPGIMGQTLWFEKLLEKAHVPAMLYNIPSRAGVSLHAETVRNLSSHEKFWAIKDSSGTVDTLTQYKKVAPNIEVFCGDDNMIPDMAAKGAAGLVSVAANVWPSVVHEYVKQCMSGENPQADSWQQACKTLFTASNPIPTKALLHDIGLIEHKTVRLPLSTEDLPSIETLRQANKMILGWKELTNS.

Thr-46 contacts pyruvate. Tyr-133 (proton donor/acceptor) is an active-site residue. The active-site Schiff-base intermediate with substrate is Lys-161. Val-202 contributes to the pyruvate binding site.

This sequence belongs to the DapA family. As to quaternary structure, homotetramer; dimer of dimers.

It localises to the cytoplasm. It catalyses the reaction L-aspartate 4-semialdehyde + pyruvate = (2S,4S)-4-hydroxy-2,3,4,5-tetrahydrodipicolinate + H2O + H(+). It functions in the pathway amino-acid biosynthesis; L-lysine biosynthesis via DAP pathway; (S)-tetrahydrodipicolinate from L-aspartate: step 3/4. Catalyzes the condensation of (S)-aspartate-beta-semialdehyde [(S)-ASA] and pyruvate to 4-hydroxy-tetrahydrodipicolinate (HTPA). This is 4-hydroxy-tetrahydrodipicolinate synthase from Wolbachia pipientis subsp. Culex pipiens (strain wPip).